Consider the following 439-residue polypeptide: Tol-Pal system protein TolB (439 aa).

An N-terminal signal peptide occupies residues 1-22 (MKKPLRWLAALTVLLLPLSALA).

It belongs to the TolB family. As to quaternary structure, the Tol-Pal system is composed of five core proteins: the inner membrane proteins TolA, TolQ and TolR, the periplasmic protein TolB and the outer membrane protein Pal. They form a network linking the inner and outer membranes and the peptidoglycan layer.

The protein localises to the periplasm. In terms of biological role, part of the Tol-Pal system, which plays a role in outer membrane invagination during cell division and is important for maintaining outer membrane integrity. The protein is Tol-Pal system protein TolB of Xanthomonas oryzae pv. oryzae (strain MAFF 311018).